Consider the following 186-residue polypeptide: Probable chorismate pyruvate-lyase (186 aa).

The substrate site is built by Arg-80, Leu-118, and Glu-170.

This sequence belongs to the UbiC family.

It localises to the cytoplasm. The catalysed reaction is chorismate = 4-hydroxybenzoate + pyruvate. The protein operates within cofactor biosynthesis; ubiquinone biosynthesis. Functionally, removes the pyruvyl group from chorismate, with concomitant aromatization of the ring, to provide 4-hydroxybenzoate (4HB) for the ubiquinone pathway. The chain is Probable chorismate pyruvate-lyase from Pseudomonas syringae pv. tomato (strain ATCC BAA-871 / DC3000).